Consider the following 393-residue polypeptide: S-adenosylmethionine synthase 1 (393 aa).

E9 contacts Mg(2+). Residue H15 coordinates ATP. K(+) is bound at residue E43. 2 residues coordinate L-methionine: E56 and Q99. Residues 167-169 (DGK), 235-238 (SGRF), D246, 252-253 (RK), A269, K273, and K277 contribute to the ATP site. D246 lines the L-methionine pocket. K277 serves as a coordination point for L-methionine.

Belongs to the AdoMet synthase family. Homotetramer. Requires Mn(2+) as cofactor. It depends on Mg(2+) as a cofactor. The cofactor is Co(2+). K(+) serves as cofactor. NH4(+) is required as a cofactor. As to expression, mostly expressed in roots, and, to a lower extent, in hypocotyls and cotyledons.

It localises to the cytoplasm. The catalysed reaction is L-methionine + ATP + H2O = S-adenosyl-L-methionine + phosphate + diphosphate. The protein operates within amino-acid biosynthesis; S-adenosyl-L-methionine biosynthesis; S-adenosyl-L-methionine from L-methionine: step 1/1. Its activity is regulated as follows. Inhibited by products of SAMS reaction (SAM, Pi, PPi), substrate analogs (cycloleucine and ethionine), and alternative nucleotides (GTP, CTP and ADP). Strongly repressed by PPPi. Its function is as follows. Catalyzes the formation of S-adenosylmethionine from methionine and ATP. The reaction comprises two steps that are both catalyzed by the same enzyme: formation of S-adenosylmethionine (AdoMet) and triphosphate, and subsequent hydrolysis of the triphosphate. In Catharanthus roseus (Madagascar periwinkle), this protein is S-adenosylmethionine synthase 1 (SAMS1).